Consider the following 142-residue polypeptide: Large ribosomal subunit protein uL13 (142 aa).

Belongs to the universal ribosomal protein uL13 family. Part of the 50S ribosomal subunit.

This protein is one of the early assembly proteins of the 50S ribosomal subunit, although it is not seen to bind rRNA by itself. It is important during the early stages of 50S assembly. The polypeptide is Large ribosomal subunit protein uL13 (Psychrobacter sp. (strain PRwf-1)).